Reading from the N-terminus, the 412-residue chain is Multifunctional CCA protein (412 aa).

Residues G8 and R11 each coordinate ATP. CTP-binding residues include G8 and R11. D21 and D23 together coordinate Mg(2+). 3 residues coordinate ATP: R91, R137, and R140. Residues R91, R137, and R140 each coordinate CTP. Positions 228-329 (TGIHTLMTLS…VKLFDSIDAW (102 aa)) constitute an HD domain.

Belongs to the tRNA nucleotidyltransferase/poly(A) polymerase family. Bacterial CCA-adding enzyme type 1 subfamily. As to quaternary structure, monomer. Can also form homodimers and oligomers. Requires Mg(2+) as cofactor. The cofactor is Ni(2+).

It carries out the reaction a tRNA precursor + 2 CTP + ATP = a tRNA with a 3' CCA end + 3 diphosphate. It catalyses the reaction a tRNA with a 3' CCA end + 2 CTP + ATP = a tRNA with a 3' CCACCA end + 3 diphosphate. In terms of biological role, catalyzes the addition and repair of the essential 3'-terminal CCA sequence in tRNAs without using a nucleic acid template. Adds these three nucleotides in the order of C, C, and A to the tRNA nucleotide-73, using CTP and ATP as substrates and producing inorganic pyrophosphate. tRNA 3'-terminal CCA addition is required both for tRNA processing and repair. Also involved in tRNA surveillance by mediating tandem CCA addition to generate a CCACCA at the 3' terminus of unstable tRNAs. While stable tRNAs receive only 3'-terminal CCA, unstable tRNAs are marked with CCACCA and rapidly degraded. In Escherichia coli (strain K12 / MC4100 / BW2952), this protein is Multifunctional CCA protein.